Here is a 292-residue protein sequence, read N- to C-terminus: MPAALVENSQVICEVWASNLEEEMRKIREIVLSYSYIAMDTEFPGVVVRPIGEFRSSIDYQYQLLRCNVDLLKIIQLGLTFTNEKGEYPSGINTWQFNFKFNLTEDMYSQDSIDLLANSGLQFQKHEEEGIDTLHFAELLMTSGVVLCDNVKWLSFHSGYDFGYMVKLLTDSRLPEEEHEFFHILNLFFPSIYDVKYLMKSCKNLKGGLQEVADQLDLQRIGRQHQAGSDSLLTGMAFFRMKELFFEDSIDDAKYCGRLYGLGTGVAQKQNEDVDCAQEKMSILAMINNMQQ.

Positions 40, 42, 161, and 230 each coordinate a divalent metal cation.

It belongs to the CAF1 family. In terms of assembly, component of the CCR4-NOT complex; distinct complexes seem to exist that differ in the participation of probably mutually exclusive catalytic subunits; the complex contains two deadenylase subunits, CNOT6 or CNOT6L, and CNOT7 or CNOT8. In the complex interacts directly with CNOT1. Interacts with BTG1, BTG2 and TOB1. Interacts with BTG4.

The protein resides in the cytoplasm. Its subcellular location is the nucleus. The enzyme catalyses Exonucleolytic cleavage of poly(A) to 5'-AMP.. In terms of biological role, has 3'-5' poly(A) exoribonuclease activity for synthetic poly(A) RNA substrate. Its function seems to be partially redundant with that of CNOT7. Catalytic component of the CCR4-NOT complex which is linked to various cellular processes including bulk mRNA degradation, miRNA-mediated repression, translational repression during translational initiation and general transcription regulation. During miRNA-mediated repression the complex also seems to act as translational repressor during translational initiation. Additional complex functions may be a consequence of its influence on mRNA expression. Associates with members of the BTG family such as TOB1 and BTG2 and is required for their anti-proliferative activity. This is CCR4-NOT transcription complex subunit 8 (Cnot8) from Mus musculus (Mouse).